Here is a 407-residue protein sequence, read N- to C-terminus: Tryptophan synthase beta chain (407 aa).

Lys-91 carries the N6-(pyridoxal phosphate)lysine modification.

The protein belongs to the TrpB family. In terms of assembly, tetramer of two alpha and two beta chains. Pyridoxal 5'-phosphate serves as cofactor.

The catalysed reaction is (1S,2R)-1-C-(indol-3-yl)glycerol 3-phosphate + L-serine = D-glyceraldehyde 3-phosphate + L-tryptophan + H2O. The protein operates within amino-acid biosynthesis; L-tryptophan biosynthesis; L-tryptophan from chorismate: step 5/5. The beta subunit is responsible for the synthesis of L-tryptophan from indole and L-serine. This chain is Tryptophan synthase beta chain, found in Streptococcus pneumoniae (strain Hungary19A-6).